A 624-amino-acid chain; its full sequence is Chaperone protein HtpG (624 aa).

The interval 1 to 336 is a; substrate-binding; that stretch reads MKGQETRGFQ…SSDLPLNVSR (336 aa). Residues 337 to 552 form a b region; the sequence is EILQDSTVTR…ADEMSTQMAK (216 aa). Residues 553-624 are c; that stretch reads LFAAAGQKVP…IRRMNQLLVS (72 aa).

Belongs to the heat shock protein 90 family. In terms of assembly, homodimer.

Its subcellular location is the cytoplasm. Molecular chaperone. Has ATPase activity. The polypeptide is Chaperone protein HtpG (Shigella flexneri).